Consider the following 343-residue polypeptide: Glycerol-3-phosphate dehydrogenase [NAD(P)+] (343 aa).

Residues Ser-15, Phe-16, Arg-36, and Lys-110 each contribute to the NADPH site. The sn-glycerol 3-phosphate site is built by Lys-110 and Gly-138. Ala-142 is a binding site for NADPH. Sn-glycerol 3-phosphate contacts are provided by Lys-193, Asp-246, Ser-256, Arg-257, and Asn-258. Lys-193 functions as the Proton acceptor in the catalytic mechanism. Arg-257 serves as a coordination point for NADPH. Glu-283 is an NADPH binding site.

This sequence belongs to the NAD-dependent glycerol-3-phosphate dehydrogenase family.

The protein localises to the cytoplasm. The catalysed reaction is sn-glycerol 3-phosphate + NAD(+) = dihydroxyacetone phosphate + NADH + H(+). The enzyme catalyses sn-glycerol 3-phosphate + NADP(+) = dihydroxyacetone phosphate + NADPH + H(+). It functions in the pathway membrane lipid metabolism; glycerophospholipid metabolism. Functionally, catalyzes the reduction of the glycolytic intermediate dihydroxyacetone phosphate (DHAP) to sn-glycerol 3-phosphate (G3P), the key precursor for phospholipid synthesis. In Alcanivorax borkumensis (strain ATCC 700651 / DSM 11573 / NCIMB 13689 / SK2), this protein is Glycerol-3-phosphate dehydrogenase [NAD(P)+].